The sequence spans 392 residues: Probable tRNA sulfurtransferase (392 aa).

Residues 60 to 162 (QQVINDLQQV…HDCAIVYGHK (103 aa)) enclose the THUMP domain. Residues 180–181 (LL), 205–206 (TF), R264, G286, and Q295 each bind ATP.

This sequence belongs to the ThiI family.

Its subcellular location is the cytoplasm. It carries out the reaction [ThiI sulfur-carrier protein]-S-sulfanyl-L-cysteine + a uridine in tRNA + 2 reduced [2Fe-2S]-[ferredoxin] + ATP + H(+) = [ThiI sulfur-carrier protein]-L-cysteine + a 4-thiouridine in tRNA + 2 oxidized [2Fe-2S]-[ferredoxin] + AMP + diphosphate. The catalysed reaction is [ThiS sulfur-carrier protein]-C-terminal Gly-Gly-AMP + S-sulfanyl-L-cysteinyl-[cysteine desulfurase] + AH2 = [ThiS sulfur-carrier protein]-C-terminal-Gly-aminoethanethioate + L-cysteinyl-[cysteine desulfurase] + A + AMP + 2 H(+). It participates in cofactor biosynthesis; thiamine diphosphate biosynthesis. In terms of biological role, catalyzes the ATP-dependent transfer of a sulfur to tRNA to produce 4-thiouridine in position 8 of tRNAs, which functions as a near-UV photosensor. Also catalyzes the transfer of sulfur to the sulfur carrier protein ThiS, forming ThiS-thiocarboxylate. This is a step in the synthesis of thiazole, in the thiamine biosynthesis pathway. The sulfur is donated as persulfide by IscS. This chain is Probable tRNA sulfurtransferase, found in Ureaplasma urealyticum serovar 10 (strain ATCC 33699 / Western).